The chain runs to 86 residues: uncharacterized protein (86 aa).

A signal peptide spans 1–31 (MKQKLLLSGLAVSTVGITSYLLKDPSNRQKA). The segment at 46–69 (PDMETFPVDKAGHPDPQDIEDNKM) is disordered. Over residues 55 to 69 (KAGHPDPQDIEDNKM) the composition is skewed to basic and acidic residues.

This is an uncharacterized protein from Bacillus subtilis (strain 168).